The following is a 216-amino-acid chain: Pyrophosphatase PpaX (216 aa).

Asp-9 serves as the catalytic Nucleophile.

The protein belongs to the HAD-like hydrolase superfamily. PpaX family. The cofactor is Mg(2+).

It catalyses the reaction diphosphate + H2O = 2 phosphate + H(+). Functionally, hydrolyzes pyrophosphate formed during P-Ser-HPr dephosphorylation by HPrK/P. Might play a role in controlling the intracellular pyrophosphate pool. In Bacillus cereus (strain Q1), this protein is Pyrophosphatase PpaX.